We begin with the raw amino-acid sequence, 299 residues long: Zeta-sarcoglycan (299 aa).

Topologically, residues 1–37 are cytoplasmic; sequence MTREQYILATQQNNLPRTENAQLYPVGIYGWRKRCLY. The helical; Signal-anchor for type II membrane protein transmembrane segment at 38–58 threads the bilayer; that stretch reads FFVLLLLVTMIVNLAMTIWIL. Residues 59-299 are Extracellular-facing; it reads KVMNFTVDGM…QSSSNICLWS (241 aa). N-linked (GlcNAc...) asparagine glycans are attached at residues Asn-62 and Asn-110. Cys-273 and Cys-289 are joined by a disulfide.

This sequence belongs to the sarcoglycan beta/delta/gamma/zeta family.

It is found in the cell membrane. Its subcellular location is the sarcolemma. The protein localises to the cytoplasm. The protein resides in the cytoskeleton. Component of the sarcoglycan complex, a subcomplex of the dystrophin-glycoprotein complex which forms a link between the F-actin cytoskeleton and the extracellular matrix. May play a role in the maintenance of striated muscle membrane stability. This Homo sapiens (Human) protein is Zeta-sarcoglycan (SGCZ).